The sequence spans 54 residues: uncharacterized protein (54 aa).

This is an uncharacterized protein from Bacillus subtilis (strain 168).